We begin with the raw amino-acid sequence, 852 residues long: Envelope glycoprotein gp160 (852 aa).

Positions 1–24 (MAHVNNYLLVTLLLISIYGYMGKN) are cleaved as a signal peptide. Residues 25 to 677 (FVTVFYGIPA…FTSWMAYIRL (653 aa)) lie on the Extracellular side of the membrane. Residue Asn-37 is glycosylated (N-linked (GlcNAc...) asparagine; by host). A disulfide bridge connects residues Cys-44 and Cys-57. Asn-70, Asn-114, Asn-148, Asn-195, Asn-205, Asn-237, Asn-247, Asn-270, Asn-276, Asn-287, and Asn-298 each carry an N-linked (GlcNAc...) asparagine; by host glycan. 4 disulfide bridges follow: Cys-101/Cys-213, Cys-108/Cys-204, Cys-113/Cys-162, and Cys-236/Cys-248. Residues 113–161 (CNKTWSSASKETTTSSASLRSSTQTLLNEDSKCIQNDSCAGIGLEEMID) form a V1 region. The V2 stretch occupies residues 162 to 204 (CQFKMTGLKRDESKQYKDTWYKQDLVCEKGTRSNESKCYIKTC). Residues 303–335 (CKRPGNKMVVPIRTVSGILFHSQPINKRPKQAW) form a V3 region. A disulfide bond links Cys-303 and Cys-336. N-linked (GlcNAc...) asparagine; by host glycans are attached at residues Asn-341, Asn-364, Asn-396, Asn-406, Asn-445, Asn-461, and Asn-464. Intrachain disulfides connect Cys-388–Cys-444 and Cys-395–Cys-417. The V4 stretch occupies residues 395-417 (CNMTFFLNWVENRTGLKRNYASC). The tract at residues 461–467 (NLTNITV) is V5. Residues 510 to 530 (GVLVLGFLGFLATAGSAMGAA) form a fusion peptide region. Residues 573–589 (LQARVTAIEKYLKDQAQ) are immunosuppression. 3 N-linked (GlcNAc...) asparagine; by host glycosylation sites follow: Asn-609, Asn-618, and Asn-634. Residues 622–648 (QQWERQVRFLDANITKLLEEAQIQQEK) are a coiled coil. The MPER; binding to GalCer stretch occupies residues 655–676 (KLNQWDIFSNWFDFTSWMAYIR). A helical membrane pass occupies residues 678-698 (GLYIVIGIVVLRIAIYIIQML). At 699 to 852 (ARLRKGYRPV…IRQGAELALL (154 aa)) the chain is on the cytoplasmic side. The short motif at 705–708 (YRPV) is the YXXV motif; contains endocytosis signal element. The tract at residues 713-740 (PSYTQQIPIRKDRGQPANEETEEGGGNN) is disordered. Cys-771 is lipidated: S-palmitoyl cysteine; by host. Residues 851–852 (LL) carry the Di-leucine internalization motif motif.

The mature envelope protein (Env) consists of a homotrimer of non-covalently associated gp120-gp41 heterodimers. The resulting complex protrudes from the virus surface as a spike. There seems to be as few as 10 spikes on the average virion. Interacts with human CD4, CCR5 and CXCR4, to form a P4HB/PDI-CD4-CXCR4-gp120 complex. Gp120 also interacts with the C-type lectins CD209/DC-SIGN and CLEC4M/DC-SIGNR (collectively referred to as DC-SIGN(R)). Gp120 and gp41 interact with GalCer. In terms of assembly, the mature envelope protein (Env) consists of a homotrimer of non-covalently associated gp120-gp41 heterodimers. The resulting complex protrudes from the virus surface as a spike. There seems to be as few as 10 spikes on the average virion. Specific enzymatic cleavages in vivo yield mature proteins. Envelope glycoproteins are synthesized as an inactive precursor that is heavily N-glycosylated and processed likely by host cell furin in the Golgi to yield the mature SU and TM proteins. The cleavage site between SU and TM requires the minimal sequence [KR]-X-[KR]-R. In terms of processing, palmitoylation of the transmembrane protein and of Env polyprotein (prior to its proteolytic cleavage) is essential for their association with host cell membrane lipid rafts. Palmitoylation is therefore required for envelope trafficking to classical lipid rafts, but not for viral replication.

The protein resides in the virion membrane. Its subcellular location is the host cell membrane. It is found in the host endosome membrane. In terms of biological role, the surface protein gp120 (SU) attaches the virus to the host lymphoid cell by binding to the primary receptor CD4. This interaction induces a structural rearrangement creating a high affinity binding site for a chemokine coreceptor like CXCR4 and/or CCR5. This peculiar 2 stage receptor-interaction strategy allows gp120 to maintain the highly conserved coreceptor-binding site in a cryptic conformation, protected from neutralizing antibodies. Since CD4 also displays a binding site for the disulfide-isomerase P4HB/PDI, a P4HB/PDI-CD4-CXCR4-gp120 complex may form. In that complex, P4HB/PDI could reach and reduce gp120 disulfide bonds, causing major conformational changes in gp120. TXN, another PDI family member could also be involved in disulfide rearrangements in Env during fusion. These changes are transmitted to the transmembrane protein gp41 and are thought to activate its fusogenic potential by unmasking its fusion peptide. Functionally, the surface protein gp120 is a ligand for CD209/DC-SIGN and CLEC4M/DC-SIGNR, which are respectively found on dendritic cells (DCs), and on endothelial cells of liver sinusoids and lymph node sinuses. These interactions allow capture of viral particles at mucosal surfaces by these cells and subsequent transmission to permissive cells. DCs are professional antigen presenting cells, critical for host immunity by inducing specific immune responses against a broad variety of pathogens. They act as sentinels in various tissues where they take up antigen, process it, and present it to T-cells following migration to lymphoid organs. HIV subverts the migration properties of dendritic cells to gain access to CD4+ T-cells in lymph nodes. Virus transmission to permissive T-cells occurs either in trans (without DCs infection, through viral capture and transmission), or in cis (following DCs productive infection, through the usual CD4-gp120 interaction), thereby inducing a robust infection. In trans infection, bound virions remain infectious over days and it is proposed that they are not degraded, but protected in non-lysosomal acidic organelles within the DCs close to the cell membrane thus contributing to the viral infectious potential during DCs' migration from the periphery to the lymphoid tissues. On arrival at lymphoid tissues, intact virions recycle back to DCs' cell surface allowing virus transmission to CD4+ T-cells. Virion capture also seems to lead to MHC-II-restricted viral antigen presentation, and probably to the activation of HIV-specific CD4+ cells. Its function is as follows. The transmembrane protein gp41 (TM) acts as a class I viral fusion protein. Under the current model, the protein has at least 3 conformational states: pre-fusion native state, pre-hairpin intermediate state, and post-fusion hairpin state. During fusion of viral and target intracellular membranes, the coiled coil regions (heptad repeats) assume a trimer-of-hairpins structure, positioning the fusion peptide in close proximity to the C-terminal region of the ectodomain. The formation of this structure appears to drive apposition and subsequent fusion of viral and target cell membranes. Complete fusion occurs in host cell endosomes and is dynamin-dependent, however some lipid transfer might occur at the plasma membrane. The virus undergoes clathrin-dependent internalization long before endosomal fusion, thus minimizing the surface exposure of conserved viral epitopes during fusion and reducing the efficacy of inhibitors targeting these epitopes. Membranes fusion leads to delivery of the nucleocapsid into the cytoplasm. The envelope glycoprotein gp160 precursor down-modulates cell surface CD4 antigen by interacting with it in the endoplasmic reticulum and blocking its transport to the cell surface. In terms of biological role, the gp120-gp41 heterodimer seems to contribute to T-cell depletion during HIV-1 infection. The envelope glycoproteins expressed on the surface of infected cells induce apoptosis through an interaction with uninfected cells expressing the receptor (CD4) and the coreceptors CXCR4 or CCR5. This type of bystander killing may be obtained by at least three distinct mechanisms. First, the interaction between the 2 cells can induce cellular fusion followed by nuclear fusion within the syncytium. Syncytia are condemned to die from apoptosis. Second, the 2 interacting cells may not fuse entirely and simply exchange plasma membrane lipids, after a sort of hemifusion process, followed by rapid death. Third, it is possible that virus-infected cells, on the point of undergoing apoptosis, fuse with CD4-expressing cells, in which case apoptosis is rapidly transmitted from one cell to the other and thus occurs in a sort of contagious fashion. Functionally, the gp120-gp41 heterodimer allows rapid transcytosis of the virus through CD4 negative cells such as simple epithelial monolayers of the intestinal, rectal and endocervical epithelial barriers. Both gp120 and gp41 specifically recognize glycosphingolipids galactosyl-ceramide (GalCer) or 3' sulfo-galactosyl-ceramide (GalS) present in the lipid rafts structures of epithelial cells. Binding to these alternative receptors allows the rapid transcytosis of the virus through the epithelial cells. This transcytotic vesicle-mediated transport of virions from the apical side to the basolateral side of the epithelial cells does not involve infection of the cells themselves. This is Envelope glycoprotein gp160 (env) from Human immunodeficiency virus type 2 subtype B (isolate EHO) (HIV-2).